Consider the following 556-residue polypeptide: Arginine--tRNA ligase (556 aa).

The short motif at 129-139 (ANPTGPLHVGH) is the 'HIGH' region element.

It belongs to the class-I aminoacyl-tRNA synthetase family. As to quaternary structure, monomer.

It localises to the cytoplasm. It carries out the reaction tRNA(Arg) + L-arginine + ATP = L-arginyl-tRNA(Arg) + AMP + diphosphate. This chain is Arginine--tRNA ligase, found in Desulfosudis oleivorans (strain DSM 6200 / JCM 39069 / Hxd3) (Desulfococcus oleovorans).